Consider the following 693-residue polypeptide: Zinc finger BED domain-containing protein 5 (693 aa).

Residues 108 to 164 (RKYDESYLSFGFTYFGNRDAPHAQCVLCKKILSNSSLAPSKLRRHLETKHAAYKDKD) form a BED-type zinc finger. The Zn(2+) site is built by Cys-132, Cys-135, His-152, and His-157.

The chain is Zinc finger BED domain-containing protein 5 (ZBED5) from Homo sapiens (Human).